Here is a 176-residue protein sequence, read N- to C-terminus: MSSKQEPVVLGKLGSSHGIKGWLKITTYTDSVEGIFDYSPWLIKEQGEWREVKVLQWRFQGKAVVACLEGVETREHAQMLTNCEIAVTPEQMDTLPEDEFYWRDLIGCEVMNTKGYNMGKVQEIVETGSNDVLLVKANAKDGFGKAERMIPFVTEQFIIEVNLTEKQITVDWDPDF.

One can recognise a PRC barrel domain in the interval 97–176 (EDEFYWRDLI…QITVDWDPDF (80 aa)).

Belongs to the RimM family. In terms of assembly, binds ribosomal protein uS19.

It is found in the cytoplasm. Functionally, an accessory protein needed during the final step in the assembly of 30S ribosomal subunit, possibly for assembly of the head region. Essential for efficient processing of 16S rRNA. May be needed both before and after RbfA during the maturation of 16S rRNA. It has affinity for free ribosomal 30S subunits but not for 70S ribosomes. The polypeptide is Ribosome maturation factor RimM (Shewanella sediminis (strain HAW-EB3)).